The chain runs to 561 residues: Transmembrane protein 209 (561 aa).

A Phosphoserine modification is found at Ser11. Residues 28–48 (VVLAWGLLNVSMAGMIYTEMT) form a helical membrane-spanning segment. Asn57 carries an N-linked (GlcNAc...) asparagine glycan. A helical transmembrane segment spans residues 60–80 (YWPLWYIELALASLFSLNALF). Ser98 carries the phosphoserine modification. Disordered stretches follow at residues 120 to 156 (LAATQISPSPPSPSIQGQSVLSYSPSRSPSTSPKFAT) and 200 to 232 (SSPYPTTVGPVESSGLRARYRSPPTVYNSPTDK). The segment covering 138–152 (SVLSYSPSRSPSTSP) has biased composition (low complexity). Phosphoserine is present on residues Ser201 and Ser248. A disordered region spans residues 250 to 270 (EEKQHRVKLGSPDSTSPSTSP). The span at 260 to 270 (SPDSTSPSTSP) shows a compositional bias: low complexity. N-linked (GlcNAc...) asparagine glycosylation is present at Asn274. Residue Ser278 is modified to Phosphoserine.

As to quaternary structure, interacts with NUP205.

Its subcellular location is the membrane. It localises to the nucleus envelope. The protein resides in the golgi apparatus. The protein localises to the cytoplasm. Functionally, nuclear envelope protein which in association with NUP205, may be involved in nuclear transport of various nuclear proteins in addition to MYC. The sequence is that of Transmembrane protein 209 (Tmem209) from Mus musculus (Mouse).